The chain runs to 244 residues: Venom nerve growth factor (244 aa).

Residues 1-18 (MSMLCYTLIIAFLIGIWA) form the signal peptide. The propeptide occupies 19–125 (APKSEDNVSL…SLNRNIRAKR (107 aa)). Disulfide bonds link cysteine 139–cysteine 204, cysteine 182–cysteine 232, and cysteine 192–cysteine 234. An N-linked (GlcNAc...) asparagine glycan is attached at asparagine 148.

This sequence belongs to the NGF-beta family. As to quaternary structure, homodimer; non-covalently linked. Post-translationally, N-glycosylated. Expressed by the venom gland.

Its subcellular location is the secreted. Its function is as follows. Nerve growth factor is important for the development and maintenance of the sympathetic and sensory nervous systems. It stimulates division and differentiation of sympathetic and embryonic sensory neurons as well as basal forebrain cholinergic neurons in the brain. Its relevance in the snake venom is not clear. However, it has been shown to inhibit metalloproteinase-dependent proteolysis of platelet glycoprotein Ib alpha, suggesting a metalloproteinase inhibition to prevent metalloprotease autodigestion and/or protection against prey proteases. Binds a lipid between the two protein chains in the homodimer. The lipid-bound form promotes histamine relase from mouse mast cells, contrary to the lipid-free form. It promotes neurite outgrowth in rat PC12 pheochromocytoma cells. This is Venom nerve growth factor from Macrovipera lebetinus (Levantine viper).